The sequence spans 155 residues: uncharacterized protein (155 aa).

A signal peptide spans 1 to 23 (MTILSLSRFMLAGVLLASFNASA).

The protein to E.coli YfjT.

This is an uncharacterized protein from Escherichia coli (strain K12).